The chain runs to 136 residues: Small ribosomal subunit protein uS9 (136 aa).

This sequence belongs to the universal ribosomal protein uS9 family.

This chain is Small ribosomal subunit protein uS9, found in Borrelia recurrentis (strain A1).